The following is a 419-amino-acid chain: Ribosome biogenesis protein WDR12 homolog (419 aa).

The tract at residues 10 to 91 (VQVHLKTKQE…EDAIDIEYVE (82 aa)) is ubiquitin-like (UBL) domain. WD repeat units lie at residues 103 to 140 (LHDD…KLTI), 142 to 184 (GHTA…NAVE), 191 to 230 (GHER…TSEG), 249 to 287 (GHRE…IKTE), 289 to 328 (STNK…GSVV), 334 to 374 (GHNA…APLY), and 378 to 416 (GHGE…IENM).

This sequence belongs to the WD repeat WDR12/YTM1 family.

It is found in the nucleus. It localises to the nucleolus. The protein resides in the nucleoplasm. Its function is as follows. Required for maturation of ribosomal RNAs and formation of the large ribosomal subunit. The protein is Ribosome biogenesis protein WDR12 homolog of Drosophila virilis (Fruit fly).